A 432-amino-acid chain; its full sequence is D-amino acid dehydrogenase (432 aa).

An FAD-binding site is contributed by 3–17 (VLVLGSGVIGTASAY).

This sequence belongs to the DadA oxidoreductase family. FAD is required as a cofactor.

It catalyses the reaction a D-alpha-amino acid + A + H2O = a 2-oxocarboxylate + AH2 + NH4(+). It participates in amino-acid degradation; D-alanine degradation; NH(3) and pyruvate from D-alanine: step 1/1. Functionally, oxidative deamination of D-amino acids. The polypeptide is D-amino acid dehydrogenase (Ectopseudomonas mendocina (strain ymp) (Pseudomonas mendocina)).